The primary structure comprises 333 residues: Glyceraldehyde-3-phosphate dehydrogenase (333 aa).

Serine 1 carries the post-translational modification N-acetylserine. Residues 10 to 11 (RI), aspartate 31, and methionine 76 contribute to the NAD(+) site. Residues 147–149 (SCT), threonine 178, 207–208 (TG), and arginine 230 contribute to the D-glyceraldehyde 3-phosphate site. The active-site Nucleophile is the cysteine 148. NAD(+) is bound at residue asparagine 312.

It belongs to the glyceraldehyde-3-phosphate dehydrogenase family. As to quaternary structure, homotetramer.

The protein localises to the cytoplasm. It catalyses the reaction D-glyceraldehyde 3-phosphate + phosphate + NAD(+) = (2R)-3-phospho-glyceroyl phosphate + NADH + H(+). It participates in carbohydrate degradation; glycolysis; pyruvate from D-glyceraldehyde 3-phosphate: step 1/5. This chain is Glyceraldehyde-3-phosphate dehydrogenase, found in Panulirus versicolor (Painted spiny lobster).